The primary structure comprises 1668 residues: Probable histone acetyltransferase HAC-like 1 (1668 aa).

Disordered stretches follow at residues 1 to 34 (MNVG…ADGL), 459 to 493 (QQQP…SEQG), and 528 to 551 (KGGQ…HDSQ). Positions 11-23 (GQMSGQAPQTNQV) are enriched in polar residues. The span at 459–469 (QQQPNSQHQQS) shows a compositional bias: low complexity. Composition is skewed to polar residues over residues 470 to 491 (ILRS…QLSE) and 536 to 551 (LSSS…HDSQ). The TAZ-type 1 zinc finger occupies 651–732 (AAGNIYYFRQ…DLQCPVCSNA (82 aa)). Basic and acidic residues predominate over residues 886-899 (KETSETAPEVKNEA). Positions 886 to 912 (KETSETAPEVKNEANDSTDITVSKSGK) are disordered. Polar residues predominate over residues 900-909 (NDSTDITVSK). The segment at 1002-1079 (HFFCIPCYNE…EYTCPNCYVE (78 aa)) adopts a PHD-type zinc-finger fold. In terms of domain architecture, CBP/p300-type HAT spans 1094–1530 (VLGAKDLPRT…VLYHLHNPTA (437 aa)). Acetyl-CoA-binding positions include 1217-1219 (LDS), 1236-1237 (RT), and Trp1292. Residues 1342 to 1365 (GAAEDMINQLRQEEDDRKQQKKGK) adopt a coiled-coil conformation. The segment at 1412-1475 (HLQYSCSHCC…TLHPVDIVGL (64 aa)) adopts a ZZ-type zinc-finger fold. Residues Cys1417, Cys1420, Cys1432, Cys1435, Cys1441, Cys1444, His1457, and His1465 each contribute to the Zn(2+) site. Residues 1553 to 1634 (EVCPDFDLRK…GCNVPRCRDL (82 aa)) form a TAZ-type 2 zinc finger. The stretch at 1630–1650 (RCRDLKEHLRRLQQQSDSRRR) forms a coiled coil.

It is found in the nucleus. It carries out the reaction L-lysyl-[protein] + acetyl-CoA = N(6)-acetyl-L-lysyl-[protein] + CoA + H(+). In terms of biological role, acetyltransferase enzyme. Acetylates histones, giving a specific tag for transcriptional activation. The protein is Probable histone acetyltransferase HAC-like 1 of Oryza sativa subsp. japonica (Rice).